We begin with the raw amino-acid sequence, 161 residues long: Endoribonuclease YbeY (161 aa).

3 residues coordinate Zn(2+): His-127, His-131, and His-137.

This sequence belongs to the endoribonuclease YbeY family. The cofactor is Zn(2+).

It localises to the cytoplasm. Single strand-specific metallo-endoribonuclease involved in late-stage 70S ribosome quality control and in maturation of the 3' terminus of the 16S rRNA. In Listeria welshimeri serovar 6b (strain ATCC 35897 / DSM 20650 / CCUG 15529 / CIP 8149 / NCTC 11857 / SLCC 5334 / V8), this protein is Endoribonuclease YbeY.